Here is an 832-residue protein sequence, read N- to C-terminus: Protein P (832 aa).

A terminal protein domain (TP) region spans residues methionine 1–glutamine 177. The interval glutamate 178–leucine 335 is spacer. The interval arginine 241–serine 263 is disordered. A compositionally biased stretch (polar residues) spans serine 251–serine 263. Residues glutamate 336–glutamine 679 form a polymerase/reverse transcriptase domain (RT) region. The Reverse transcriptase domain maps to glutamate 346–isoleucine 589. Residues aspartate 418, aspartate 540, and aspartate 541 each coordinate Mg(2+).

The protein belongs to the hepadnaviridae P protein family.

It catalyses the reaction DNA(n) + a 2'-deoxyribonucleoside 5'-triphosphate = DNA(n+1) + diphosphate. It carries out the reaction Endonucleolytic cleavage to 5'-phosphomonoester.. Activated by host HSP70 and HSP40 in vitro to be able to bind the epsilon loop of the pgRNA. Because deletion of the RNase H region renders the protein partly chaperone-independent, the chaperones may be needed indirectly to relieve occlusion of the RNA-binding site by this domain. Inhibited by several reverse-transcriptase inhibitors: Lamivudine, Adefovir and Entecavir. Functionally, multifunctional enzyme that converts the viral RNA genome into dsDNA in viral cytoplasmic capsids. This enzyme displays a DNA polymerase activity that can copy either DNA or RNA templates, and a ribonuclease H (RNase H) activity that cleaves the RNA strand of RNA-DNA heteroduplexes in a partially processive 3'- to 5'-endonucleasic mode. Neo-synthesized pregenomic RNA (pgRNA) are encapsidated together with the P protein, and reverse-transcribed inside the nucleocapsid. Initiation of reverse-transcription occurs first by binding the epsilon loop on the pgRNA genome, and is initiated by protein priming, thereby the 5'-end of (-)DNA is covalently linked to P protein. Partial (+)DNA is synthesized from the (-)DNA template and generates the relaxed circular DNA (RC-DNA) genome. After budding and infection, the RC-DNA migrates in the nucleus, and is converted into a plasmid-like covalently closed circular DNA (cccDNA). The activity of P protein does not seem to be necessary for cccDNA generation, and is presumably released from (+)DNA by host nuclear DNA repair machinery. The polypeptide is Protein P (Homo sapiens (Human)).